A 195-amino-acid polypeptide reads, in one-letter code: Glucagon family neuropeptides (195 aa).

The first 20 residues, 1-20 (MAKSSRATLALLIYGILMRY), serve as a signal peptide directing secretion. Residues 21 to 82 (SQCTPIGMGF…YYPPERRAET (62 aa)) constitute a propeptide that is removed on maturation. The interval 113 to 132 (VGEEEEDEEDSEPLSKRHSD) is disordered. Residues 115–124 (EEEEDEEDSE) are compositionally biased toward acidic residues. Lys-167 carries the post-translational modification Lysine amide. A propeptide spanning residues 171 to 195 (LVVPSVWTGIRDTVIITPEKRGKRY) is cleaved from the precursor.

The protein belongs to the glucagon family. In terms of tissue distribution, brain, testis, ovary and stomach. Not pancreas, pituitary, muscle and liver.

The protein localises to the secreted. In terms of biological role, primary role of GHRH is to release GH from the pituitary. Functionally, PACAP plays pivotal roles as a neurotransmitter and/or a neuromodulator. In Clarias macrocephalus (Bighead catfish), this protein is Glucagon family neuropeptides.